The sequence spans 398 residues: Phosphoglycerate kinase (398 aa).

Substrate-binding positions include Asp-21 to Asn-23, Arg-37, His-60 to Arg-63, Arg-117, and Arg-157. ATP is bound by residues Glu-332 and Gly-357–Thr-360.

This sequence belongs to the phosphoglycerate kinase family. As to quaternary structure, monomer.

It is found in the cytoplasm. The enzyme catalyses (2R)-3-phosphoglycerate + ATP = (2R)-3-phospho-glyceroyl phosphate + ADP. It functions in the pathway carbohydrate degradation; glycolysis; pyruvate from D-glyceraldehyde 3-phosphate: step 2/5. In Halobacterium salinarum (strain ATCC 29341 / DSM 671 / R1), this protein is Phosphoglycerate kinase.